Here is a 202-residue protein sequence, read N- to C-terminus: Peptidyl-tRNA hydrolase (202 aa).

Tyr14 lines the tRNA pocket. The active-site Proton acceptor is His19. Positions 64, 66, and 112 each coordinate tRNA.

This sequence belongs to the PTH family. As to quaternary structure, monomer.

Its subcellular location is the cytoplasm. It carries out the reaction an N-acyl-L-alpha-aminoacyl-tRNA + H2O = an N-acyl-L-amino acid + a tRNA + H(+). Functionally, hydrolyzes ribosome-free peptidyl-tRNAs (with 1 or more amino acids incorporated), which drop off the ribosome during protein synthesis, or as a result of ribosome stalling. Catalyzes the release of premature peptidyl moieties from peptidyl-tRNA molecules trapped in stalled 50S ribosomal subunits, and thus maintains levels of free tRNAs and 50S ribosomes. The sequence is that of Peptidyl-tRNA hydrolase from Xanthobacter autotrophicus (strain ATCC BAA-1158 / Py2).